The sequence spans 2521 residues: Piezo-type mechanosensitive ion channel component 1 (2521 aa).

The Cytoplasmic segment spans residues 1-12 (MEPHVLGAVLYW). A helical transmembrane segment spans residues 13 to 25 (LLLPCALLAACLL). The Extracellular portion of the chain corresponds to 26–28 (RFS). The helical transmembrane segment at 29 to 44 (GLSLVYLLFLLLLPWF) threads the bilayer. Residues 45 to 58 (PGPTRCGLQGHTGR) lie on the Cytoplasmic side of the membrane. A helical transmembrane segment spans residues 59 to 81 (LLRALLGLSLLFLVAHLALQICL). At 82 to 121 (HIVPRLDQLLGPSCSRWETLSRHIGVTRLDLKDIPNAIRL) the chain is on the extracellular side. Residues 122–138 (VAPDLGILVVSSVCLGI) form a helical membrane-spanning segment. Topologically, residues 139 to 194 (CGRLARNTRQSPHPRELDDDERDVDASPTAGLQEAATLAPTRRSRLAARFRVTAHW) are cytoplasmic. The chain crosses the membrane as a helical span at residues 195-214 (LLVAAGRVLAVTLLALAGIA). Residues 215–216 (HP) are Extracellular-facing. Residues 217–236 (SALSSVYLLLFLALCTWWAC) traverse the membrane as a helical segment. The Cytoplasmic segment spans residues 237-247 (HFPISTRGFSR). The helical transmembrane segment at 248–268 (LCVAVGCFGAGHLICLYCYQM) threads the bilayer. The Extracellular portion of the chain corresponds to 269–309 (PLAQALLPPAGIWARVLGLKDFVGPTNCSSPHALVLNTGLD). The N-linked (GlcNAc...) asparagine glycan is linked to Asn-295. The chain crosses the membrane as a helical span at residues 310–330 (WPVYASPGVLLLLCYATASLR). Topologically, residues 331–417 (KLRAYRPSGQ…EASPLHSLGH (87 aa)) are cytoplasmic. The helical transmembrane segment at 418–438 (LIMDQSYVCALIAMMVWSITY) threads the bilayer. The Extracellular segment spans residues 439 to 440 (HS). Residues 441–456 (WLTFVLLLWACLIWTV) form a helical membrane-spanning segment. The Cytoplasmic segment spans residues 457 to 461 (RSRHQ). A helical membrane pass occupies residues 462–484 (LAMLCSPCILLYGMTLCCLRYVW). The Extracellular segment spans residues 485 to 512 (AMDLRPELPTTLGPVSLRQLGLEHTRYP). Residues 513 to 530 (CLDLGAMLLYTLTFWLLL) traverse the membrane as a helical segment. Residues 531–574 (RQFVKEKLLKWAESPAALTEVTVADTEPTRTQTLLQSLGELVKG) are Cytoplasmic-facing. The chain crosses the membrane as a helical span at residues 575-595 (VYAKYWIYVCAGMFIVVSFAG). Arg-596 is a topological domain (extracellular). Residues 597-617 (LVVYKIVYMFLFLLCLTLFQV) traverse the membrane as a helical segment. At 618-627 (YYSLWRKLLK) the chain is on the cytoplasmic side. The chain crosses the membrane as a helical span at residues 628–649 (AFWWLVVAYTMLVLIAVYTFQF). Over 650 to 679 (QDFPAYWRNLTGFTDEQLGDLGLEQFSVSE) the chain is Extracellular. A helical transmembrane segment spans residues 680–696 (LFSSILVPGFFLLACIL). Topologically, residues 697-816 (QLHYFHRPFM…RRLLELHVFK (120 aa)) are cytoplasmic. Thr-734 is modified (phosphothreonine). The disordered stretch occupies residues 738-769 (REEQQEHQQQQQEEEEEEEDSRDEGLGVATPH). The span at 749-759 (QEEEEEEEDSR) shows a compositional bias: acidic residues. Ser-758 is modified (phosphoserine). The helical transmembrane segment at 817–828 (LVALYTVWVALK) threads the bilayer. Over 829-831 (EVS) the chain is Extracellular. The chain crosses the membrane as a helical span at residues 832–845 (VMNLLLVVLWAFAL). Over 846–859 (PYPRFRPMASCLST) the chain is Cytoplasmic. The helical transmembrane segment at 860-874 (VWTCVIIVCKMLYQL) threads the bilayer. At 875–926 (KVVNPQEYSSNCTEPFPNSTNLLPTEISQSLLYRGPVDPANWFGVRKGFPNL) the chain is on the extracellular side. A helical transmembrane segment spans residues 927 to 954 (GYIQNHLQVLLLLVFEAIVYRRQEHYRR). Over 955-994 (QHQLAPLPAQAVFASGTRQQLDQDLLGCLKYFINFFFYKF) the chain is Cytoplasmic. A helical membrane pass occupies residues 995–1010 (GLEICFLMAVNVIGQR). The Extracellular segment spans residues 1011–1012 (MN). Residues 1013–1028 (FLVTLHGCWLVAILTR) form a helical membrane-spanning segment. At 1029–1041 (RHRQAIARLWPNY) the chain is on the cytoplasmic side. The helical transmembrane segment at 1042-1057 (CLFLALFLLYQYLLCL) threads the bilayer. At 1058–1096 (GMPPALCIDYPWRWSRAVPMNSALIKWLYLPDFFRAPNS) the chain is on the extracellular side. The helical transmembrane segment at 1097–1118 (TNLISDFLLLLCASQQWQVFSA) threads the bilayer. At 1119–1153 (ERTEEWQRMAGVNTDRLEPLRGEPNPVPNFIHCRS) the chain is on the cytoplasmic side. Residues 1154 to 1180 (YLDMLKVAVFRYLFWLVLVVVFVTGAT) form a helical membrane-spanning segment. Over 1181-1185 (RISIF) the chain is Extracellular. The chain crosses the membrane as a helical span at residues 1186–1204 (GLGYLLACFYLLLFGTALL). The Cytoplasmic segment spans residues 1205 to 1217 (QRDTRARLVLWDC). Residues 1218–1236 (LILYNVTVIISKNMLSLLA) form a helical membrane-spanning segment. At 1237 to 1285 (CVFVEQMQTGFCWVIQLFSLVCTVKGYYDPKEMMDRDQDCLLPVEEAGI) the chain is on the extracellular side. Residues 1286 to 1302 (IWDSVCFFFLLLQRRVF) form a helical membrane-spanning segment. The Cytoplasmic segment spans residues 1303–1656 (LSHYYLHVRA…ELLLDRRLRI (354 aa)). A coiled-coil region spans residues 1339–1368 (HRRIEEKSLAQLKRQMERIRAKQEKHRQGR). Disordered regions lie at residues 1356 to 1402 (RIRA…RRQW), 1462 to 1498 (RQQEQEQARQEQAGQLPTGGGPSQEVEPAEGPEEAAA), and 1576 to 1630 (TLPG…DPGE). The span at 1385–1398 (LEPGPDSPGGSSPP) shows a compositional bias: low complexity. Phosphoserine occurs at positions 1391 and 1396. A phosphoserine mark is found at Ser-1636 and Ser-1646. Residues 1657–1700 (PELEEAELFAEGQGRALRLLRAVYQCVAAHSELLCYFIIILNHM) form a helical membrane-spanning segment. The Extracellular portion of the chain corresponds to 1701-1704 (VTAS). A helical transmembrane segment spans residues 1705-1720 (AGSLVLPVLVFLWAML). Over 1721–1728 (SIPRPSKR) the chain is Cytoplasmic. A helical transmembrane segment spans residues 1729 to 1747 (FWMTAIVFTEIAVVVKYLF). Topologically, residues 1748–1779 (QFGFFPWNSHVVLRRYENKPYFPPRILGLEKT) are extracellular. A helical transmembrane segment spans residues 1780-1801 (DGYIKYDLVQLMALFFHRSQLL). Topologically, residues 1802–1960 (CYGLWDHEED…HTKYRAATDV (159 aa)) are cytoplasmic. A compositionally biased stretch (basic and acidic residues) spans 1811-1822 (DSPSKEHDKSGE). The disordered stretch occupies residues 1811-1921 (DSPSKEHDKS…RPSRSGGRVR (111 aa)). Thr-1854 bears the Phosphothreonine mark. The span at 1859-1868 (VELRPRDTRR) shows a compositional bias: basic and acidic residues. The segment covering 1869 to 1878 (ISLRFRRRKK) has biased composition (basic residues). A compositionally biased stretch (acidic residues) spans 1890–1903 (EAEDREEEEGEEEK). Residues 1904 to 1913 (EAPTGREKRP) are compositionally biased toward basic and acidic residues. The chain crosses the membrane as a helical span at residues 1961 to 1980 (YALMFLADVVDFIIIIFGFW). Over 1981 to 2000 (AFGKHSAATDITSSLSDDQV) the chain is Extracellular. The helical transmembrane segment at 2001–2017 (PEAFLVMLLIQFSTMVV) threads the bilayer. The Cytoplasmic segment spans residues 2018–2031 (DRALYLRKTVLGKL). A helical membrane pass occupies residues 2032–2052 (AFQVALVLAIHLWMFFILPAV). At 2053–2060 (TERMFNQN) the chain is on the extracellular side. A helical membrane pass occupies residues 2061 to 2076 (VVAQLWYFVKCIYFAL). Residues 2077 to 2176 (SAYQIRCGYP…KKKIVKYGMG (100 aa)) are Cytoplasmic-facing. A helical transmembrane segment spans residues 2177–2197 (GLIILFLIAIIWFPLLFMSLV). Over 2198–2431 (RSVVGVVNQP…IFSDKVSPPS (234 aa)) the chain is Extracellular. The N-linked (GlcNAc...) asparagine glycan is linked to Asn-2294. A disulfide bond links Cys-2411 and Cys-2415. The helical transmembrane segment at 2432–2452 (LGFLAGYGIMGLYVSIVLVIG) threads the bilayer. Over 2453–2521 (KFVRGFFSEI…TMIKWTREKE (69 aa)) the chain is Cytoplasmic.

The protein belongs to the PIEZO (TC 1.A.75) family. In terms of assembly, homotrimer; the homotrimer forms a propeller-shaped Piezo channel with a cation-ion conducting pore. Heterotrimeric interaction may occur between PIEZO1 and PIEZO2. Interacts with PKD2. Interacts with STOML3. Interacts with TMC1, TMC2, PCDH15 and CIB2; the interaction may be part of the MET complex. Interacts with MDFIC (via C-terminus); the interaction prolongs Piezo channel inactivation. Interacts with MDFI (via C-terminus); the interaction prolongs Piezo channel inactivation. As to expression, expressed in numerous tissues. In normal brain, expressed exclusively in neurons, not in astrocytes. In Alzheimer disease brains, expressed in about half of the activated astrocytes located around classical senile plaques. In Parkinson disease substantia nigra, not detected in melanin-containing neurons nor in activated astrocytes. Expressed in erythrocytes (at protein level). Expressed in myoblasts (at protein level).

It is found in the endoplasmic reticulum membrane. It localises to the endoplasmic reticulum-Golgi intermediate compartment membrane. The protein resides in the cell membrane. Its subcellular location is the cell projection. The protein localises to the lamellipodium membrane. It catalyses the reaction K(+)(in) = K(+)(out). The enzyme catalyses Na(+)(in) = Na(+)(out). It carries out the reaction Ca(2+)(in) = Ca(2+)(out). The catalysed reaction is Mg(2+)(in) = Mg(2+)(out). With respect to regulation, regulated by auxillary subunits MDFIC and MDFI. Down-regulated by phosphatidylserines exposed on the cell surface. Divalent ions decrease the single-channel permeability of K(+). In terms of biological role, pore-forming subunit of the mechanosensitive non-specific cation Piezo channel required for rapidly adapting mechanically activated (MA) currents and has a key role in sensing touch and tactile pain. Piezo channels are homotrimeric three-blade propeller-shaped structures that utilize a cap-motion and plug-and-latch mechanism to gate their ion-conducting pathways. Generates currents characterized by a linear current-voltage relationship that are sensitive to ruthenium red and gadolinium. Conductance to monovalent alkali ions is highest for K(+), intermediate for Na(+) and lowest for Li(+). Divalent ions except for Mn(2+) permeate the channel but more slowly than the monovalent ions and they also reduce K(+) currents. Plays a key role in epithelial cell adhesion by maintaining integrin activation through R-Ras recruitment to the ER, most probably in its activated state, and subsequent stimulation of calpain signaling. In inner ear hair cells, PIEZO1/2 subunits may constitute part of the mechanotransducer (MET) non-selective cation channel complex where they may act as pore-forming ion-conducting component in the complex. In the kidney, may contribute to the detection of intraluminal pressure changes and to urine flow sensing. Acts as a shear-stress sensor that promotes endothelial cell organization and alignment in the direction of blood flow through calpain activation. Plays a key role in blood vessel formation and vascular structure in both development and adult physiology. Acts as a sensor of phosphatidylserine (PS) flipping at the plasma membrane and governs morphogenesis of muscle cells. In myoblasts, flippase-mediated PS enrichment at the inner leaflet of plasma membrane triggers channel activation and Ca2+ influx followed by Rho GTPases signal transduction, leading to assembly of cortical actomyosin fibers and myotube formation. This chain is Piezo-type mechanosensitive ion channel component 1, found in Homo sapiens (Human).